We begin with the raw amino-acid sequence, 127 residues long: KP4 killer toxin (127 aa).

Positions 1-22 are cleaved as a signal peptide; that stretch reads MQIINVVYSFLFAAAMLPVVHS. 5 disulfide bridges follow: cysteine 27/cysteine 100, cysteine 33/cysteine 103, cysteine 49/cysteine 89, cysteine 57/cysteine 82, and cysteine 66/cysteine 127.

As to quaternary structure, monomer.

Its subcellular location is the secreted. Its function is as follows. This protein is lethal to sensitive cells of the same or related species. It specifically inhibits voltage-gated calcium channels. It inhibits cell growth and division by blocking calcium import. This chain is KP4 killer toxin (M2A), found in Mycosarcoma maydis (Corn smut fungus).